A 349-amino-acid polypeptide reads, in one-letter code: MSSLSGKVQTVLGLVEPGTLGRTLTHEHLTMTFDCCYYPPPPSHEAISKEPIIMKNLFWIQKNPYSHKENLQLNQETEAIKEELLDFKAKGGGALVENTTTGLSRDVRTLKWLAEETGVHIIAGAGFYVDATHSSETRAKSVEQLTDVLVNEILCGADGTSIKCGVIGEIGCSWPLTDSERKVLQATAHAQTQLGCPVIIHPGRNQSAPFQIIRVLQEAGGDISKTVMSHIDRTILDKKELLEFAQFGCYLEYDLFGTELFHYQFNPDIDMPNDNKRIKRVRLLVDEGYEDRILMAHDIHTKNRLTKYGGHGYSHILTNIVPKMLLRGITEGALDKILIENPKQWLTFK.

6 residues coordinate a divalent metal cation: H26, H28, E169, H201, H230, and D298.

The protein belongs to the metallo-dependent hydrolases superfamily. Phosphotriesterase family. The cofactor is a divalent metal cation.

The protein resides in the cytoplasm. Its subcellular location is the cytosol. The catalysed reaction is N-acetyltaurine + H2O = taurine + acetate. The enzyme catalyses N-propanoyltaurine + H2O = propanoate + taurine. It carries out the reaction N-acetyl-L-methionine + H2O = L-methionine + acetate. It catalyses the reaction N-acetyl-L-isoleucine + H2O = L-isoleucine + acetate. The catalysed reaction is N-acetyl-L-leucine + H2O = L-leucine + acetate. The enzyme catalyses N-acetyl-L-valine + H2O = L-valine + acetate. Functionally, N-acetyltaurine hydrolase that regulates feeding by catalyzing the hydrolysis of N-acetyltaurine into taurine and acetate. N-acetyltaurine has anorexigenic and anti-obesity effects that are dependent on GFRAL receptor and GDF15. PTER also acts on other N-acetyl amino acids (Met, Ile, Leu, Val) and N-propionyltaurine, but at lower rates. The chain is N-acetyltaurine hydrolase (PTER) from Bos taurus (Bovine).